The primary structure comprises 330 residues: Ketol-acid reductoisomerase (NADP(+)) (330 aa).

The KARI N-terminal Rossmann domain maps to 3–184 (LPVYYDKDID…GGGRMGVLET (182 aa)). NADP(+) is bound by residues 26–29 (YGAQ), Ser52, and Ser54. Residue His109 is part of the active site. Gly135 is an NADP(+) binding site. A KARI C-terminal knotted domain is found at 185–329 (SFKEECESDL…EILRAPFNHK (145 aa)). Residues Asp193, Glu197, Glu229, and Glu233 each coordinate Mg(2+). Residue Ser254 coordinates substrate.

The protein belongs to the ketol-acid reductoisomerase family. It depends on Mg(2+) as a cofactor.

The enzyme catalyses (2R)-2,3-dihydroxy-3-methylbutanoate + NADP(+) = (2S)-2-acetolactate + NADPH + H(+). It catalyses the reaction (2R,3R)-2,3-dihydroxy-3-methylpentanoate + NADP(+) = (S)-2-ethyl-2-hydroxy-3-oxobutanoate + NADPH + H(+). Its pathway is amino-acid biosynthesis; L-isoleucine biosynthesis; L-isoleucine from 2-oxobutanoate: step 2/4. It functions in the pathway amino-acid biosynthesis; L-valine biosynthesis; L-valine from pyruvate: step 2/4. In terms of biological role, involved in the biosynthesis of branched-chain amino acids (BCAA). Catalyzes an alkyl-migration followed by a ketol-acid reduction of (S)-2-acetolactate (S2AL) to yield (R)-2,3-dihydroxy-isovalerate. In the isomerase reaction, S2AL is rearranged via a Mg-dependent methyl migration to produce 3-hydroxy-3-methyl-2-ketobutyrate (HMKB). In the reductase reaction, this 2-ketoacid undergoes a metal-dependent reduction by NADPH to yield (R)-2,3-dihydroxy-isovalerate. In Helicobacter pylori (strain Shi470), this protein is Ketol-acid reductoisomerase (NADP(+)).